The primary structure comprises 881 residues: MSQQTTIRKLAELVNTPVEKLLEQLAGAGMKFSGPDQVVTSSEKVKLLGFLRRSHGKPEQAPEESDQSAKKITLNRRKQQEVTVNSGRSKTTVNVEVRQKRTYVKDGARAMTPDEERADILRKLEESRARNLAEQQALAEKDRLRDEAIVRAREEEIAAKERAEAEKKAAEEAAAAAKAAEALAAAKPKRAPIDETAPRPPRTPAAAPAAPRSAPPPPRNDDRNNRSAPRNERGPGDRFAGQMHLSAADRARRGNSNNSNTRGRPGGRNQAGGRRDMSRGGNNAGPHAFERPTAPVVREVAIGDTITVADLAQKLALKGGEVVKALFKMGVMATITQSIDHDTAALVTEELGHKAIRANDNDAEDALLASTGENQGEATQRPPVVTIMGHVDHGKTSLLDYIRRTKVATGEAGGITQHIGAYHVDTPKGVISFLDTPGHAAFTSMRARGAKLTDIVVLVVAADDGVMPQTKEAIQHARSAGVPLIVAINKIDKSDADPMRVKNELLSEQVVAEDFGGDTQMVEISAKTGLGIDDLLDAISIQAELLELKAVDEGRASGVVIESSLDKGRGPVATVLVQQGRLKKGDYLVCGIQYGRVRALFDETGKQPEFAGPSIPVQVLGLSGVPEAGDDFVVVEDERLAKDVAQQRETKRRESRLVATAGSRMEDIMATLGKGEGQQVLNLVIKADVQGSVQALSQALVALSNEDIRINVIHSGVGGITESDANSAAASKATVIGFNVRADASARRIIESNGVDLRYFSIIYDVIDQVKQVASGLLGVEIREEIIGIAEVRDVFRSSKLGAVAGSMVIEGVVRRNKPIRVLRDSVVIFEGELESLRRFKENVEEVRNGTECGIAVKAYNDVKPGDQIECFERIEVPRTL.

Disordered stretches follow at residues Arg53–Thr92 and Ala163–Pro292. Residues Glu81–Thr92 show a composition bias toward polar residues. Residues Glu172–Ala186 show a composition bias toward low complexity. A compositionally biased stretch (basic and acidic residues) spans Arg219–Gly236. A compositionally biased stretch (low complexity) spans Gly254–Gly263. In terms of domain architecture, tr-type G spans Gln380 to Lys549. Residues Gly389 to Thr396 form a G1 region. Residue Gly389–Thr396 participates in GTP binding. The interval Gly414–His418 is G2. The interval Asp435–Gly438 is G3. GTP contacts are provided by residues Asp435–His439 and Asn489–Asp492. The interval Asn489–Asp492 is G4. Positions Ser525–Lys527 are G5.

Belongs to the TRAFAC class translation factor GTPase superfamily. Classic translation factor GTPase family. IF-2 subfamily.

Its subcellular location is the cytoplasm. Its function is as follows. One of the essential components for the initiation of protein synthesis. Protects formylmethionyl-tRNA from spontaneous hydrolysis and promotes its binding to the 30S ribosomal subunits. Also involved in the hydrolysis of GTP during the formation of the 70S ribosomal complex. The polypeptide is Translation initiation factor IF-2 (Stenotrophomonas maltophilia (strain K279a)).